Consider the following 160-residue polypeptide: MNPTVSIAVILTVLQAAHCQMIRDLSACLLGQSLRVDCRYENKTSNPLTYEFSLTRQQKHIIQSTISVSENVYRNRANVTMHKNLVCLYLHSFTTSDEGVYMCELKATNDYTGNQIKNITVIKDKLEKCVRLSLLIQNTSWLLLLLLSLPLLQAVDFVSL.

The signal sequence occupies residues 1 to 19 (MNPTVSIAVILTVLQAAHC). Q20 is subject to Pyrrolidone carboxylic acid. Positions 20 to 120 (QMIRDLSACL…YTGNQIKNIT (101 aa)) constitute an Ig-like V-type domain. 2 cysteine pairs are disulfide-bonded: C28–C129 and C38–C103. N-linked (GlcNAc...) asparagine glycans are attached at residues N42, N78, and N118. A lipid anchor (GPI-anchor amidated cysteine) is attached at C129. The propeptide at 130–160 (VRLSLLIQNTSWLLLLLLSLPLLQAVDFVSL) is removed in mature form. N138 is a glycosylation site (N-linked (GlcNAc...) asparagine).

In terms of processing, the N-terminus is blocked. As to expression, forebrain, cerebellum and tectum.

It localises to the cell membrane. May play a role in cell-cell or cell-ligand interactions during synaptogenesis and other events in the brain. This Gallus gallus (Chicken) protein is Thy-1 membrane glycoprotein (THY1).